The primary structure comprises 276 residues: ATP synthase subunit a (276 aa).

6 consecutive transmembrane segments (helical) span residues I27–G47, G61–A81, L120–L140, D159–L179, L225–L245, and G246–H266.

The protein belongs to the ATPase A chain family. F-type ATPases have 2 components, CF(1) - the catalytic core - and CF(0) - the membrane proton channel. CF(1) has five subunits: alpha(3), beta(3), gamma(1), delta(1), epsilon(1). CF(0) has four main subunits: a, b, b' and c.

The protein localises to the cellular thylakoid membrane. Key component of the proton channel; it plays a direct role in the translocation of protons across the membrane. The protein is ATP synthase subunit a of Synechocystis sp. (strain ATCC 27184 / PCC 6803 / Kazusa).